A 534-amino-acid chain; its full sequence is MSFETKPNYLLLTNPDTPLSVCTSPYYSPSGKTASIPSSEASKPEGTNGQWSHLPTGATYVTDEFSSEFQIQNGSTAAQSGNANNYADPLSHRRYFNNVNGYNHHQFYDTASQASVSSPATSVTSSLSPPDSLSNGHTTQRHHIGKAISFCKVCGDKASGYHYGVTSCEGCKGFFRRSIQRKIDYRCLKQQVCEIKRESRNRCQYCRFKKCLDSGMSKDSVRQMKFRNAMRDDKSPDSVFVPEISTLERQEEVDAVYEAVLRAHTTFSFYTDIKIRSIVARPFNVRINEDSKMNRLNAWQIYAHEIDVDIKEVVNFVKEIPKFNFINGNDKAVLLRKNAFPLYLLRIVRGMSNRGLMLRDGRLIDFKSLQLLYGSLADEMLAFANHIITIGCTDGDIALFIVLILCQPLTTEQQFSTNFKSQLQLLEMFDFYKKVLFQKMTCRIDGCDTYKQLMKCIHELNRLNELHKQQLNILRENLSFLNLPPLVVEMFQLSTLPLPVNHNNQENQYTPAPEHQSPQPQQPTPNQQQTPVHC.

Disordered stretches follow at residues 30–53 and 119–139; these read SGKTASIPSSEASKPEGTNGQWSH and PATSVTSSLSPPDSLSNGHTT. Low complexity predominate over residues 119–130; sequence PATSVTSSLSPP. Positions 148 to 223 form a DNA-binding region, nuclear receptor; that stretch reads ISFCKVCGDK…SGMSKDSVRQ (76 aa). NR C4-type zinc fingers lie at residues 151-171 and 187-211; these read CKVCGDKASGYHYGVTSCEGC and CLKQQVCEIKRESRNRCQYCRFKKC. One can recognise an NR LBD domain in the interval 252-493; the sequence is EVDAVYEAVL…PPLVVEMFQL (242 aa). The segment at 502–534 is disordered; the sequence is HNNQENQYTPAPEHQSPQPQQPTPNQQQTPVHC. Residues 511 to 534 are compositionally biased toward low complexity; sequence PAPEHQSPQPQQPTPNQQQTPVHC.

This sequence belongs to the nuclear hormone receptor family. NR1 subfamily. Most abundant in embryos.

Its subcellular location is the nucleus. Functionally, transcriptional regulator which is involved in the sex determination and X chromosome dosage compensation pathways. Directly binds to five 5'-A(G/C)(G/T)(T/G)C(A/G)-3' sites in the promoter of sex-determining factor xol-1 to negatively regulate its expression and promote hermaphrodite development. Together with fox-1 is involved in making the distinction between one and two X-chromosomes. Plays a role in the fox-1-mediated repression of the functionally active isoform (isoform b) of the sex-determining factor xol-1 gene to promote hermaphrodite development. Plays a role in the association of the dosage compensation complex proteins dpy-27 and sdc-3 with the hermaphrodite X chromosomes. This Caenorhabditis elegans protein is Steroid hormone receptor family member cnr14.